Consider the following 382-residue polypeptide: Na(+)/H(+) antiporter NhaA 2 (382 aa).

11 helical membrane passes run 7–27, 58–78, 94–114, 124–144, 153–173, 178–198, 199–219, 255–275, 291–311, 327–347, and 361–381; these read MVLSETFPGILLIFFTFLALL, LDLWINDGLIAIFFLCIGLEL, SLPIFGALGGMITPALIFIAI, GWAIPTATDIAFAVGILMLLG, LFLLSLAIFDDLGAIVIIALF, LSALAIIICLFCIFALLLLNY, YHITHLSLYVLVGVVLWIAML, NPWVVYFILPLFAFANAGIDI, IILGLFLGKQLGVFTFCFIAI, FYGICILTGIGFTMSLFIDGL, and LAILVASFLSAIVGFIYLKIV.

Belongs to the NhaA Na(+)/H(+) (TC 2.A.33) antiporter family.

It localises to the cell inner membrane. The enzyme catalyses Na(+)(in) + 2 H(+)(out) = Na(+)(out) + 2 H(+)(in). Its function is as follows. Na(+)/H(+) antiporter that extrudes sodium in exchange for external protons. This Campylobacter jejuni (strain RM1221) protein is Na(+)/H(+) antiporter NhaA 2.